The sequence spans 194 residues: dITP/XTP pyrophosphatase (194 aa).

8–13 (TKNKGK) is a substrate binding site. Mg(2+) is bound by residues Glu-41 and Asp-70. The active-site Proton acceptor is Asp-70. Residues Ser-71, 153–156 (FGYD), Lys-176, and 181–182 (HR) each bind substrate.

It belongs to the HAM1 NTPase family. In terms of assembly, homodimer. The cofactor is Mg(2+).

The catalysed reaction is XTP + H2O = XMP + diphosphate + H(+). It carries out the reaction dITP + H2O = dIMP + diphosphate + H(+). It catalyses the reaction ITP + H2O = IMP + diphosphate + H(+). Its function is as follows. Pyrophosphatase that catalyzes the hydrolysis of nucleoside triphosphates to their monophosphate derivatives, with a high preference for the non-canonical purine nucleotides XTP (xanthosine triphosphate), dITP (deoxyinosine triphosphate) and ITP. Seems to function as a house-cleaning enzyme that removes non-canonical purine nucleotides from the nucleotide pool, thus preventing their incorporation into DNA/RNA and avoiding chromosomal lesions. The chain is dITP/XTP pyrophosphatase from Halalkalibacterium halodurans (strain ATCC BAA-125 / DSM 18197 / FERM 7344 / JCM 9153 / C-125) (Bacillus halodurans).